We begin with the raw amino-acid sequence, 208 residues long: V-type ATP synthase subunit E (208 aa).

Belongs to the V-ATPase E subunit family.

Its function is as follows. Produces ATP from ADP in the presence of a proton gradient across the membrane. The polypeptide is V-type ATP synthase subunit E (atpE) (Chlamydia muridarum (strain MoPn / Nigg)).